Reading from the N-terminus, the 316-residue chain is Probable cell division protein WhiA (316 aa).

A DNA-binding region (H-T-H motif) is located at residues 275–309 (TLKELGEMVSGGKISKSGINHRLRKIDDIAEKLRA).

This sequence belongs to the WhiA family.

Involved in cell division and chromosome segregation. The polypeptide is Probable cell division protein WhiA (Bacillus anthracis (strain CDC 684 / NRRL 3495)).